The sequence spans 92 residues: Probable Fe(2+)-trafficking protein (92 aa).

The protein belongs to the Fe(2+)-trafficking protein family.

In terms of biological role, could be a mediator in iron transactions between iron acquisition and iron-requiring processes, such as synthesis and/or repair of Fe-S clusters in biosynthetic enzymes. The polypeptide is Probable Fe(2+)-trafficking protein (Shewanella halifaxensis (strain HAW-EB4)).